A 325-amino-acid polypeptide reads, in one-letter code: Solute carrier family 35 member B1 (325 aa).

Helical transmembrane passes span P18–I38, F54–I74, W88–L108, Y139–Y159, I171–V191, L213–L233, I246–Y266, and V288–L308. Residues K321–H325 carry the Di-lysine motif motif.

This sequence belongs to the nucleotide-sugar transporter family. SLC35B subfamily.

It is found in the endoplasmic reticulum membrane. In terms of biological role, probable sugar transporter. The chain is Solute carrier family 35 member B1 (SLC35B1) from Gallus gallus (Chicken).